Here is a 622-residue protein sequence, read N- to C-terminus: Mitochondrial distribution and morphology protein 34 (622 aa).

The region spanning 1 to 204 (MSFKVNWNSL…LPTLIHQLSL (204 aa)) is the SMP-LTD domain. 3 disordered regions span residues 364-393 (YSNKDAPNKPKRRRIKVHKKSKAKQDDNTV), 442-468 (LETMSTGSSSSASSQVIAHPTPKRAYQ), and 572-592 (LDGGKNSANTNNSSGGKNFRP). A compositionally biased stretch (basic residues) spans 372-385 (KPKRRRIKVHKKSK). The span at 446 to 455 (STGSSSSASS) shows a compositional bias: low complexity. The span at 577–587 (NSANTNNSSGG) shows a compositional bias: polar residues.

This sequence belongs to the MDM34 family. As to quaternary structure, component of the ER-mitochondria encounter structure (ERMES) or MDM complex, composed of MMM1, MDM10, MDM12 and MDM34.

Its subcellular location is the mitochondrion outer membrane. Its function is as follows. Component of the ERMES/MDM complex, which serves as a molecular tether to connect the endoplasmic reticulum (ER) and mitochondria. Components of this complex are involved in the control of mitochondrial shape and protein biogenesis, and function in nonvesicular lipid trafficking between the ER and mitochondria. MDM34 is required for the interaction of the ER-resident membrane protein MMM1 and the outer mitochondrial membrane-resident beta-barrel protein MDM10. The chain is Mitochondrial distribution and morphology protein 34 from Candida albicans (strain WO-1) (Yeast).